Reading from the N-terminus, the 200-residue chain is Recombination protein RecR (200 aa).

Residues cysteine 59–cysteine 74 form a C4-type zinc finger. The Toprim domain occupies serine 82–proline 177.

This sequence belongs to the RecR family.

Functionally, may play a role in DNA repair. It seems to be involved in an RecBC-independent recombinational process of DNA repair. It may act with RecF and RecO. In Rhodopseudomonas palustris (strain ATCC BAA-98 / CGA009), this protein is Recombination protein RecR.